Reading from the N-terminus, the 384-residue chain is Putative glutamate--cysteine ligase 2-2 (384 aa).

It belongs to the glutamate--cysteine ligase type 2 family. YbdK subfamily.

The enzyme catalyses L-cysteine + L-glutamate + ATP = gamma-L-glutamyl-L-cysteine + ADP + phosphate + H(+). Its function is as follows. ATP-dependent carboxylate-amine ligase which exhibits weak glutamate--cysteine ligase activity. In Rubrobacter xylanophilus (strain DSM 9941 / JCM 11954 / NBRC 16129 / PRD-1), this protein is Putative glutamate--cysteine ligase 2-2.